The sequence spans 288 residues: uncharacterized protein (288 aa).

Disordered stretches follow at residues Lys-31 to Ser-52 and Tyr-179 to Lys-288. Polar residues predominate over residues Arg-206–Ile-217. Residues Tyr-221–Ala-236 show a composition bias toward basic and acidic residues. Low complexity-rich tracts occupy residues Pro-237–Pro-249 and Ala-267–Ala-276.

This is an uncharacterized protein from Bos taurus (Bovine).